Here is a 538-residue protein sequence, read N- to C-terminus: Cytosolic Fe-S cluster assembly factor NAR1 homolog (538 aa).

8 residues coordinate [4Fe-4S] cluster: Cys19, Cys64, Cys67, Cys70, Cys218, Cys273, Cys453, and Cys457.

Belongs to the NARF family.

The protein localises to the cytoplasm. Its subcellular location is the nucleus. Its function is as follows. Component of the cytosolic Fe/S protein assembly machinery. Required for maturation of extramitochondrial Fe/S proteins. May play a role in the transfer of pre-assembled Fe/S clusters to target apoproteins. The chain is Cytosolic Fe-S cluster assembly factor NAR1 homolog from Schizosaccharomyces pombe (strain 972 / ATCC 24843) (Fission yeast).